The primary structure comprises 207 residues: Ras-related protein Rab-7a (207 aa).

N-acetylthreonine is present on Thr-2. GTP contacts are provided by Ser-17, Gly-18, Val-19, Gly-20, Lys-21, Thr-22, Ser-23, Ser-34, Asn-35, Tyr-37, and Thr-40. Mg(2+) is bound at residue Thr-22. The short motif at 28-41 is the Switch 1 element; it reads YVNKKFSNQYKATI. Mg(2+) contacts are provided by Thr-40 and Asp-63. Gly-66 provides a ligand contact to GTP. The Switch 2 motif lies at 67–82; that stretch reads QERFQSLGVAFYRGAD. Ser-72 is subject to Phosphoserine. Positions 125, 126, 128, 156, and 157 each coordinate GTP. Residues Lys-191 and Lys-194 each participate in a glycyl lysine isopeptide (Lys-Gly) (interchain with G-Cter in ubiquitin) cross-link. 2 S-geranylgeranyl cysteine lipidation sites follow: Cys-205 and Cys-207. A Cysteine methyl ester modification is found at Cys-207.

The protein belongs to the small GTPase superfamily. Rab family. As to quaternary structure, interacts with NTRK1/TRKA, RILP, PSMA7, RNF115 and FYCO1. Interacts with the PIK3C3/VPS34-PIK3R4 complex. The GTP-bound form interacts with OSBPL1A and RAC1. Interacts with CLN3. Interacts with CHM, the substrate-binding subunit of the Rab geranylgeranyltransferase complex. Interacts with C9orf72. Does not interact with HPS4 and the BLOC-3 complex (heterodimer of HPS1 and HPS4). Interacts with CLN5. Interacts with PLEKHM1 (via N- and C-terminus). Interacts with PRPH; the interaction is direct. Interacts with VPS13A. The GDP-bound form interacts with RIMOC1. Interacts with the MON1A-CCZ1B complex and this interaction is enhanced in the presence of RIMOC1. Interacts with VPS39 and VPS41. Forms a ternary complex with LAMP2 and RUFY4; the interaction with LAMP2 is mediated by RUFY4 (via RUN and coiled coil domains). The cofactor is Mg(2+). In terms of processing, deubiquitination at Lys-191 and Lys-194 by USP32. Phosphorylated at Ser-72 by LRRK1; phosphorylation is dependent on protein kinase C (PKC) activation of LRRK1. Post-translationally, prenylated. Prenylation is required for association with cellular membranes. In terms of tissue distribution, widely expressed. High expression in liver, heart and kidney. Found in sensory and motor neurons.

The protein resides in the cytoplasmic vesicle. The protein localises to the phagosome membrane. It localises to the late endosome membrane. It is found in the lysosome membrane. Its subcellular location is the melanosome membrane. The protein resides in the autophagosome membrane. The protein localises to the lipid droplet. It localises to the endosome membrane. It is found in the mitochondrion membrane. It catalyses the reaction GTP + H2O = GDP + phosphate + H(+). Regulated by guanine nucleotide exchange factors (GEFs) which promote the exchange of bound GDP for free GTP. Regulated by GTPase activating proteins (GAPs) which increase the GTP hydrolysis activity. Inhibited by GDP dissociation inhibitors (GDIs). The small GTPases Rab are key regulators of intracellular membrane trafficking, from the formation of transport vesicles to their fusion with membranes. Rabs cycle between an inactive GDP-bound form and an active GTP-bound form that is able to recruit to membranes different sets of downstream effectors directly responsible for vesicle formation, movement, tethering and fusion. In its active state, RAB7A binds to a variety of effector proteins playing a key role in the regulation of endo-lysosomal trafficking. Governs early-to-late endosomal maturation, microtubule minus-end as well as plus-end directed endosomal migration and positioning, and endosome-lysosome transport through different protein-protein interaction cascades. Also plays a central role in growth-factor-mediated cell signaling, nutrient-transporter-mediated nutrient uptake, neurotrophin transport in the axons of neurons and lipid metabolism. Also involved in regulation of some specialized endosomal membrane trafficking, such as maturation of melanosomes, pathogen-induced phagosomes (or vacuoles) and autophagosomes. Plays a role in the maturation and acidification of phagosomes that engulf pathogens, such as S.aureus and Mycobacteria. Plays a role in the fusion of phagosomes with lysosomes. In concert with RAC1, plays a role in regulating the formation of RBs (ruffled borders) in osteoclasts. Controls the endosomal trafficking and neurite outgrowth signaling of NTRK1/TRKA. Regulates the endocytic trafficking of the EGF-EGFR complex by regulating its lysosomal degradation. Involved in the ADRB2-stimulated lipolysis through lipophagy, a cytosolic lipase-independent autophagic pathway. Required for the exosomal release of SDCBP, CD63 and syndecan. Required for vesicular trafficking and cell surface expression of ACE2. May play a role in PRPH neuronal intermediate filament assembly. This chain is Ras-related protein Rab-7a, found in Mus musculus (Mouse).